Here is a 786-residue protein sequence, read N- to C-terminus: Endonuclease MutS2 (786 aa).

Position 332 to 339 (332 to 339) interacts with ATP; that stretch reads GPNTGGKT. The Smr domain maps to 710-785; the sequence is VDLRGLDAEE…GDGVTMVELK (76 aa).

The protein belongs to the DNA mismatch repair MutS family. MutS2 subfamily. In terms of assembly, homodimer. Binds to stalled ribosomes, contacting rRNA.

Its function is as follows. Endonuclease that is involved in the suppression of homologous recombination and thus may have a key role in the control of bacterial genetic diversity. Acts as a ribosome collision sensor, splitting the ribosome into its 2 subunits. Detects stalled/collided 70S ribosomes which it binds and splits by an ATP-hydrolysis driven conformational change. Acts upstream of the ribosome quality control system (RQC), a ribosome-associated complex that mediates the extraction of incompletely synthesized nascent chains from stalled ribosomes and their subsequent degradation. Probably generates substrates for RQC. In Clostridium beijerinckii (strain ATCC 51743 / NCIMB 8052) (Clostridium acetobutylicum), this protein is Endonuclease MutS2.